The primary structure comprises 177 residues: ATP synthase subunit delta (177 aa).

Belongs to the ATPase delta chain family. In terms of assembly, F-type ATPases have 2 components, F(1) - the catalytic core - and F(0) - the membrane proton channel. F(1) has five subunits: alpha(3), beta(3), gamma(1), delta(1), epsilon(1). F(0) has three main subunits: a(1), b(2) and c(10-14). The alpha and beta chains form an alternating ring which encloses part of the gamma chain. F(1) is attached to F(0) by a central stalk formed by the gamma and epsilon chains, while a peripheral stalk is formed by the delta and b chains.

It localises to the cell inner membrane. F(1)F(0) ATP synthase produces ATP from ADP in the presence of a proton or sodium gradient. F-type ATPases consist of two structural domains, F(1) containing the extramembraneous catalytic core and F(0) containing the membrane proton channel, linked together by a central stalk and a peripheral stalk. During catalysis, ATP synthesis in the catalytic domain of F(1) is coupled via a rotary mechanism of the central stalk subunits to proton translocation. Functionally, this protein is part of the stalk that links CF(0) to CF(1). It either transmits conformational changes from CF(0) to CF(1) or is implicated in proton conduction. The polypeptide is ATP synthase subunit delta (Proteus mirabilis (strain HI4320)).